Here is a 306-residue protein sequence, read N- to C-terminus: Methionyl-tRNA formyltransferase (306 aa).

108-111 (SLLP) contacts (6S)-5,6,7,8-tetrahydrofolate.

It belongs to the Fmt family.

It carries out the reaction L-methionyl-tRNA(fMet) + (6R)-10-formyltetrahydrofolate = N-formyl-L-methionyl-tRNA(fMet) + (6S)-5,6,7,8-tetrahydrofolate + H(+). Attaches a formyl group to the free amino group of methionyl-tRNA(fMet). The formyl group appears to play a dual role in the initiator identity of N-formylmethionyl-tRNA by promoting its recognition by IF2 and preventing the misappropriation of this tRNA by the elongation apparatus. This chain is Methionyl-tRNA formyltransferase, found in Paenarthrobacter aurescens (strain TC1).